The following is a 515-amino-acid chain: 1-pyrroline-5-carboxylate dehydrogenase 1 (515 aa).

Active-site residues include Glu286 and Cys320.

The protein belongs to the aldehyde dehydrogenase family. RocA subfamily.

The enzyme catalyses L-glutamate 5-semialdehyde + NAD(+) + H2O = L-glutamate + NADH + 2 H(+). The protein operates within amino-acid degradation; L-proline degradation into L-glutamate; L-glutamate from L-proline: step 2/2. This chain is 1-pyrroline-5-carboxylate dehydrogenase 1 (rocA1), found in Halalkalibacterium halodurans (strain ATCC BAA-125 / DSM 18197 / FERM 7344 / JCM 9153 / C-125) (Bacillus halodurans).